Consider the following 736-residue polypeptide: MNVERSELLAGIGQDALWALIEGRHGDPFSILGPHQSGGMTIVRVYLPGAEAVDLIDATSGRVVAPFSIAHPSGLFAATVASRTGYRLRITWPDAVQITEDPYSFGLLLGELDLHLISEGTHYSLSRTLGAVAMSIDGISGVRFAVWAPNARRVSVVGDFNAWDGRRNPMRLRPSAGVWELFIPRLAPGERYKFEIVDAEGTCLPQKADPVARASEAAPSTASIVASSTPFRWTDDGWMKGRSRQDRLEGAFSVYEVHVGSWLRDQKDGNRSLDWVELSQRLVPYVSDMGFTHIELLPIMEHPFGGSWGYQPLGLFAPTGRYGTPEDFAYFVDRCHGAGLGVILDWVPAHFPTDVWGLARFDGSALYEHEDPREGFHRDWNTLIYNLGRNEVKGFLIASALEWLERYHIDGLRVDAVASMLYRDYSRNEGEWIPNQYGGRENLEAVEFFKHLNSIIHERCPHAMTIAEESTAWPGVTKPPEQGGLGFDIKWNMGWMHDSLSYIEKDPIYRSYAHGTMTFGMIYAYSERFILPISHDEVVYGKGSLLTKMPGDEWQKFANLRSYLAFMWGHPGKKLLFMGSEIAQPSEWNHDGSVTWDVLDQPQHVGIQRLVKDLNGLYGDEPALQFGDFHSEGFEWAAADDAVNSVLGMLRYAPDRASSVLVMSNFTPVPRYGYRIGVPSDGVWIERITTDAREYGGSGLVNGAVSSEPVPAHGRPVSLSLTLPPLSTIFLQGPSP.

Catalysis depends on Asp415, which acts as the Nucleophile. Residue Glu468 is the Proton donor of the active site.

Belongs to the glycosyl hydrolase 13 family. GlgB subfamily. As to quaternary structure, monomer.

The catalysed reaction is Transfers a segment of a (1-&gt;4)-alpha-D-glucan chain to a primary hydroxy group in a similar glucan chain.. It participates in glycan biosynthesis; glycogen biosynthesis. Functionally, catalyzes the formation of the alpha-1,6-glucosidic linkages in glycogen by scission of a 1,4-alpha-linked oligosaccharide from growing alpha-1,4-glucan chains and the subsequent attachment of the oligosaccharide to the alpha-1,6 position. The sequence is that of 1,4-alpha-glucan branching enzyme GlgB 2 from Rhizobium johnstonii (strain DSM 114642 / LMG 32736 / 3841) (Rhizobium leguminosarum bv. viciae).